The chain runs to 445 residues: MSPNSTLWQTILQDLEKLYNEETYNELFLPVTSTFKDQNGLLTMVVANEFLKNRINKLYIAKINELATKYSSTPVRLKFVSQEEVIEEPVADRKLTIDYRQGNLNSTYTFDSFVVGKSNMFAFRMAMKVADHPGAVANPFYIFGDVGLGKTHLMQAIGNYILDNDVEKRILYVKADNFIEDFVSLLSRNKNKTEEFNAKYKDIDVILVDDIQIMANASKTQMEFFKLFDYLYLNNKQIVITSDKPASQLTNIMPRLTTRFEAGLSVDIQIPELEHRISILKRKTATLDANLEVSEDILTFIASQFAANIREMEGALIRLISYAQTFNLEITMNVVEEALGAVLKTKKKTNDLNENNYDKIQSIVADYFQVSLPDLIGKKRHAKFTLPRHIAMYLIKLKYNIPYKTIGSLFNDRDHSTVLSACEKVERDMRMDSNLKFAVDSIVKK.

Positions 1–73 (MSPNSTLWQT…NELATKYSST (73 aa)) are domain I, interacts with DnaA modulators. Residues 73-102 (TPVRLKFVSQEEVIEEPVADRKLTIDYRQG) form a domain II region. A domain III, AAA+ region region spans residues 103 to 323 (NLNSTYTFDS…GALIRLISYA (221 aa)). ATP is bound by residues G147, G149, K150, and T151. The segment at 324–445 (QTFNLEITMN…KFAVDSIVKK (122 aa)) is domain IV, binds dsDNA.

This sequence belongs to the DnaA family. As to quaternary structure, oligomerizes as a right-handed, spiral filament on DNA at oriC.

It localises to the cytoplasm. Plays an essential role in the initiation and regulation of chromosomal replication. ATP-DnaA binds to the origin of replication (oriC) to initiate formation of the DNA replication initiation complex once per cell cycle. Binds the DnaA box (a 9 base pair repeat at the origin) and separates the double-stranded (ds)DNA. Forms a right-handed helical filament on oriC DNA; dsDNA binds to the exterior of the filament while single-stranded (ss)DNA is stabiized in the filament's interior. The ATP-DnaA-oriC complex binds and stabilizes one strand of the AT-rich DNA unwinding element (DUE), permitting loading of DNA polymerase. After initiation quickly degrades to an ADP-DnaA complex that is not apt for DNA replication. Binds acidic phospholipids. This chain is Chromosomal replication initiator protein DnaA, found in Acholeplasma laidlawii.